We begin with the raw amino-acid sequence, 359 residues long: Membrane-bound lytic murein transglycosylase C (359 aa).

Residues 1 to 16 (MKKYLALALIAPLLIS) form the signal peptide. The N-palmitoyl cysteine moiety is linked to residue C17. C17 is lipidated: S-diacylglycerol cysteine.

It belongs to the transglycosylase Slt family.

It is found in the cell outer membrane. It carries out the reaction Exolytic cleavage of the (1-&gt;4)-beta-glycosidic linkage between N-acetylmuramic acid (MurNAc) and N-acetylglucosamine (GlcNAc) residues in peptidoglycan, from either the reducing or the non-reducing ends of the peptidoglycan chains, with concomitant formation of a 1,6-anhydrobond in the MurNAc residue.. Murein-degrading enzyme. May play a role in recycling of muropeptides during cell elongation and/or cell division. The chain is Membrane-bound lytic murein transglycosylase C from Escherichia coli O157:H7.